Reading from the N-terminus, the 194-residue chain is Dephospho-CoA kinase (194 aa).

The DPCK domain maps to 4–194 (ALGLTGSIGM…HLVSKLTEGT (191 aa)). Residue 12-17 (GMGKST) participates in ATP binding.

It belongs to the CoaE family.

It is found in the cytoplasm. It carries out the reaction 3'-dephospho-CoA + ATP = ADP + CoA + H(+). It participates in cofactor biosynthesis; coenzyme A biosynthesis; CoA from (R)-pantothenate: step 5/5. Functionally, catalyzes the phosphorylation of the 3'-hydroxyl group of dephosphocoenzyme A to form coenzyme A. This Jannaschia sp. (strain CCS1) protein is Dephospho-CoA kinase.